The chain runs to 1377 residues: DNA-directed RNA polymerase subunit beta'' (1377 aa).

Zn(2+) contacts are provided by Cys-224, Cys-294, Cys-301, and Cys-304.

Belongs to the RNA polymerase beta' chain family. RpoC2 subfamily. In plastids the minimal PEP RNA polymerase catalytic core is composed of four subunits: alpha, beta, beta', and beta''. When a (nuclear-encoded) sigma factor is associated with the core the holoenzyme is formed, which can initiate transcription. Zn(2+) is required as a cofactor.

The protein resides in the plastid. Its subcellular location is the chloroplast. It catalyses the reaction RNA(n) + a ribonucleoside 5'-triphosphate = RNA(n+1) + diphosphate. Its function is as follows. DNA-dependent RNA polymerase catalyzes the transcription of DNA into RNA using the four ribonucleoside triphosphates as substrates. The sequence is that of DNA-directed RNA polymerase subunit beta'' from Calycanthus floridus var. glaucus (Eastern sweetshrub).